A 223-amino-acid chain; its full sequence is Urease accessory protein UreF (223 aa).

This sequence belongs to the UreF family. As to quaternary structure, ureD, UreF and UreG form a complex that acts as a GTP-hydrolysis-dependent molecular chaperone, activating the urease apoprotein by helping to assemble the nickel containing metallocenter of UreC. The UreE protein probably delivers the nickel.

Its subcellular location is the cytoplasm. In terms of biological role, required for maturation of urease via the functional incorporation of the urease nickel metallocenter. This Mesorhizobium japonicum (strain LMG 29417 / CECT 9101 / MAFF 303099) (Mesorhizobium loti (strain MAFF 303099)) protein is Urease accessory protein UreF.